We begin with the raw amino-acid sequence, 312 residues long: Glyoxylate/hydroxypyruvate reductase A (312 aa).

Arg227 is a catalytic residue. The Proton donor role is filled by His275.

Belongs to the D-isomer specific 2-hydroxyacid dehydrogenase family. GhrA subfamily.

Its subcellular location is the cytoplasm. The enzyme catalyses glycolate + NADP(+) = glyoxylate + NADPH + H(+). It carries out the reaction (R)-glycerate + NAD(+) = 3-hydroxypyruvate + NADH + H(+). The catalysed reaction is (R)-glycerate + NADP(+) = 3-hydroxypyruvate + NADPH + H(+). Catalyzes the NADPH-dependent reduction of glyoxylate and hydroxypyruvate into glycolate and glycerate, respectively. This is Glyoxylate/hydroxypyruvate reductase A from Salmonella paratyphi B (strain ATCC BAA-1250 / SPB7).